A 380-amino-acid chain; its full sequence is Tryptophan 2,3-dioxygenase (380 aa).

Substrate contacts are provided by residues 57 to 61 (FIITH) and R128. Position 313 (H313) interacts with heme. A substrate-binding site is contributed by T328.

It belongs to the tryptophan 2,3-dioxygenase family. As to quaternary structure, homotetramer. Dimer of dimers. The cofactor is heme.

The catalysed reaction is L-tryptophan + O2 = N-formyl-L-kynurenine. Its pathway is amino-acid degradation; L-tryptophan degradation via kynurenine pathway; L-kynurenine from L-tryptophan: step 1/2. The protein operates within pigment biosynthesis; ommochrome biosynthesis. Its function is as follows. Heme-dependent dioxygenase that catalyzes the oxidative cleavage of the L-tryptophan (L-Trp) pyrrole ring and converts L-tryptophan to N-formyl-L-kynurenine. Catalyzes the oxidative cleavage of the indole moiety. The chain is Tryptophan 2,3-dioxygenase from Drosophila virilis (Fruit fly).